Reading from the N-terminus, the 312-residue chain is Adenylyl-sulfate kinase, chloroplastic (312 aa).

142-149 provides a ligand contact to ATP; that stretch reads GLSGSGKS. The active-site Phosphoserine intermediate is the serine 216.

It belongs to the APS kinase family.

It localises to the plastid. It is found in the chloroplast. It catalyses the reaction adenosine 5'-phosphosulfate + ATP = 3'-phosphoadenylyl sulfate + ADP + H(+). It participates in sulfur metabolism; hydrogen sulfide biosynthesis; sulfite from sulfate: step 2/3. In terms of biological role, catalyzes the synthesis of activated sulfate. This Catharanthus roseus (Madagascar periwinkle) protein is Adenylyl-sulfate kinase, chloroplastic (AKN).